We begin with the raw amino-acid sequence, 100 residues long: Small ribosomal subunit protein uS14c (100 aa).

The protein belongs to the universal ribosomal protein uS14 family. In terms of assembly, part of the 30S ribosomal subunit.

Its subcellular location is the plastid. It localises to the chloroplast. Binds 16S rRNA, required for the assembly of 30S particles. The chain is Small ribosomal subunit protein uS14c from Nasturtium officinale (Watercress).